Reading from the N-terminus, the 97-residue chain is DNA/RNA-binding protein Alba (97 aa).

Lys-15 carries the N6-acetyllysine modification.

The protein belongs to the histone-like Alba family. In terms of processing, acetylated. Acetylation at Lys-15 decreases DNA-binding affinity.

The protein resides in the cytoplasm. Its subcellular location is the chromosome. In terms of biological role, binds double-stranded DNA tightly but without sequence specificity. Involved in DNA compaction. The sequence is that of DNA/RNA-binding protein Alba from Ignicoccus hospitalis (strain KIN4/I / DSM 18386 / JCM 14125).